The following is a 126-amino-acid chain: Membrane-anchored ubiquitin-fold protein 2 (126 aa).

A Ubiquitin-like domain is found at 14-79 (VEVRFRLDDG…VLENNRTLAE (66 aa)). Cysteine methyl ester is present on C123. C123 is lipidated: S-geranylgeranyl cysteine. Residues 124–126 (TIL) constitute a propeptide, removed in mature form.

Its subcellular location is the cell membrane. May serve as docking site to facilitate the association of other proteins to the plasma membrane. This chain is Membrane-anchored ubiquitin-fold protein 2 (MUB2), found in Oryza sativa subsp. japonica (Rice).